Reading from the N-terminus, the 149-residue chain is METQRASLCLGRWSLWLLLLALVVPSASAQALSYREAVLRAVDRLNEQSSEANLYRLLELDQPPKADEDPGTPKPVSFTVKETVCPRPTRQPPELCDFKENGRVKQCVGTVTLDQIKDPLDITCNEVQGVRGGGLCYCRRRFCVCVGRG.

The first 29 residues, 1 to 29, serve as a signal peptide directing secretion; the sequence is METQRASLCLGRWSLWLLLLALVVPSASA. Residues 30-130 constitute a propeptide that is removed on maturation; sequence QALSYREAVL…DITCNEVQGV (101 aa). Residues 61-80 form a disordered region; the sequence is DQPPKADEDPGTPKPVSFTV. Disulfide bonds link Cys-85-Cys-96, Cys-107-Cys-124, Cys-136-Cys-145, and Cys-138-Cys-143. Arg-148 bears the Arginine amide mark.

The protein belongs to the cathelicidin family.

Its subcellular location is the secreted. Its function is as follows. Microbicidal activity. Active against E.coli, Listeria monocytogenes and C.albicans, in vitro. The sequence is that of Protegrin-3 (NPG3) from Sus scrofa (Pig).